The primary structure comprises 97 residues: Co-chaperonin GroES (97 aa).

Belongs to the GroES chaperonin family. As to quaternary structure, heptamer of 7 subunits arranged in a ring. Interacts with the chaperonin GroEL.

Its subcellular location is the cytoplasm. In terms of biological role, together with the chaperonin GroEL, plays an essential role in assisting protein folding. The GroEL-GroES system forms a nano-cage that allows encapsulation of the non-native substrate proteins and provides a physical environment optimized to promote and accelerate protein folding. GroES binds to the apical surface of the GroEL ring, thereby capping the opening of the GroEL channel. In Klebsiella pneumoniae subsp. pneumoniae (strain ATCC 700721 / MGH 78578), this protein is Co-chaperonin GroES.